Consider the following 231-residue polypeptide: Deoxyribose-phosphate aldolase (231 aa).

The active-site Proton donor/acceptor is D86. K147 (schiff-base intermediate with acetaldehyde) is an active-site residue. Catalysis depends on K172, which acts as the Proton donor/acceptor. The tract at residues 206–231 is disordered; it reads WQAETAGETVTEPESDRDGADTTDGY.

The protein belongs to the DeoC/FbaB aldolase family. DeoC type 1 subfamily.

The protein resides in the cytoplasm. The catalysed reaction is 2-deoxy-D-ribose 5-phosphate = D-glyceraldehyde 3-phosphate + acetaldehyde. Its pathway is carbohydrate degradation; 2-deoxy-D-ribose 1-phosphate degradation; D-glyceraldehyde 3-phosphate and acetaldehyde from 2-deoxy-alpha-D-ribose 1-phosphate: step 2/2. Its function is as follows. Catalyzes a reversible aldol reaction between acetaldehyde and D-glyceraldehyde 3-phosphate to generate 2-deoxy-D-ribose 5-phosphate. The sequence is that of Deoxyribose-phosphate aldolase from Haloarcula marismortui (strain ATCC 43049 / DSM 3752 / JCM 8966 / VKM B-1809) (Halobacterium marismortui).